Here is a 172-residue protein sequence, read N- to C-terminus: Translation initiation factor IF-3 (172 aa).

The protein belongs to the IF-3 family. Monomer.

It localises to the cytoplasm. IF-3 binds to the 30S ribosomal subunit and shifts the equilibrium between 70S ribosomes and their 50S and 30S subunits in favor of the free subunits, thus enhancing the availability of 30S subunits on which protein synthesis initiation begins. The polypeptide is Translation initiation factor IF-3 (Campylobacter fetus subsp. fetus (strain 82-40)).